The following is a 365-amino-acid chain: Mannitol dehydrogenase (365 aa).

Residues C50, H72, C103, C106, C109, C117, and C166 each contribute to the Zn(2+) site.

Belongs to the zinc-containing alcohol dehydrogenase family. Zn(2+) is required as a cofactor.

The protein localises to the cytoplasm. It carries out the reaction D-mannitol + NAD(+) = D-mannose + NADH + H(+). Functionally, oxidizes mannitol to mannose. Provides the initial step by which translocated mannitol is committed to central metabolism and, by regulating mannitol pool size, is important in regulating salt tolerance at the cellular level. The chain is Mannitol dehydrogenase (MTD) from Apium graveolens (Celery).